Reading from the N-terminus, the 153-residue chain is Ribosome maturation factor RimP (153 aa).

This sequence belongs to the RimP family.

The protein localises to the cytoplasm. Its function is as follows. Required for maturation of 30S ribosomal subunits. In Burkholderia pseudomallei (strain 1710b), this protein is Ribosome maturation factor RimP.